The chain runs to 115 residues: uncharacterized protein (115 aa).

Transmembrane regions (helical) follow at residues 6 to 26 (ILII…PFMV), 43 to 63 (ALSC…IHIL), and 84 to 104 (IFKV…VLVQ).

This sequence belongs to the AzlD/HI_1737/HP1330 family.

The protein localises to the cell membrane. This is an uncharacterized protein from Helicobacter pylori (strain ATCC 700392 / 26695) (Campylobacter pylori).